The chain runs to 419 residues: CinA-like protein (419 aa).

Belongs to the CinA family.

In Leptospira borgpetersenii serovar Hardjo-bovis (strain JB197), this protein is CinA-like protein.